The sequence spans 211 residues: Thiamine-phosphate synthase (211 aa).

4-amino-2-methyl-5-(diphosphooxymethyl)pyrimidine-binding positions include 37–41 and Asn69; that span reads QLRIK. Mg(2+)-binding residues include Asp70 and Asp89. Ser108 serves as a coordination point for 4-amino-2-methyl-5-(diphosphooxymethyl)pyrimidine. 134 to 136 serves as a coordination point for 2-[(2R,5Z)-2-carboxy-4-methylthiazol-5(2H)-ylidene]ethyl phosphate; the sequence is TQT. Lys137 contributes to the 4-amino-2-methyl-5-(diphosphooxymethyl)pyrimidine binding site. 2-[(2R,5Z)-2-carboxy-4-methylthiazol-5(2H)-ylidene]ethyl phosphate-binding positions include Gly166 and 186–187; that span reads VS.

It belongs to the thiamine-phosphate synthase family. Mg(2+) is required as a cofactor.

It carries out the reaction 2-[(2R,5Z)-2-carboxy-4-methylthiazol-5(2H)-ylidene]ethyl phosphate + 4-amino-2-methyl-5-(diphosphooxymethyl)pyrimidine + 2 H(+) = thiamine phosphate + CO2 + diphosphate. The enzyme catalyses 2-(2-carboxy-4-methylthiazol-5-yl)ethyl phosphate + 4-amino-2-methyl-5-(diphosphooxymethyl)pyrimidine + 2 H(+) = thiamine phosphate + CO2 + diphosphate. The catalysed reaction is 4-methyl-5-(2-phosphooxyethyl)-thiazole + 4-amino-2-methyl-5-(diphosphooxymethyl)pyrimidine + H(+) = thiamine phosphate + diphosphate. It functions in the pathway cofactor biosynthesis; thiamine diphosphate biosynthesis; thiamine phosphate from 4-amino-2-methyl-5-diphosphomethylpyrimidine and 4-methyl-5-(2-phosphoethyl)-thiazole: step 1/1. In terms of biological role, condenses 4-methyl-5-(beta-hydroxyethyl)thiazole monophosphate (THZ-P) and 2-methyl-4-amino-5-hydroxymethyl pyrimidine pyrophosphate (HMP-PP) to form thiamine monophosphate (TMP). This chain is Thiamine-phosphate synthase, found in Salmonella paratyphi B (strain ATCC BAA-1250 / SPB7).